A 459-amino-acid polypeptide reads, in one-letter code: Replication initiator protein (459 aa).

Its function is as follows. Essential for pSAM2 replication. The protein is Replication initiator protein (repSA) of Streptomyces ambofaciens.